Reading from the N-terminus, the 309-residue chain is ATP synthase gamma chain (309 aa).

Belongs to the ATPase gamma chain family. F-type ATPases have 2 components, CF(1) - the catalytic core - and CF(0) - the membrane proton channel. CF(1) has five subunits: alpha(3), beta(3), gamma(1), delta(1), epsilon(1). CF(0) has three main subunits: a, b and c.

It localises to the cell membrane. Its function is as follows. Produces ATP from ADP in the presence of a proton gradient across the membrane. The gamma chain is believed to be important in regulating ATPase activity and the flow of protons through the CF(0) complex. In Mycolicibacterium gilvum (strain PYR-GCK) (Mycobacterium gilvum (strain PYR-GCK)), this protein is ATP synthase gamma chain.